The following is a 206-amino-acid chain: Ribosomal RNA large subunit methyltransferase E (206 aa).

Residues Gly-54, Trp-56, Asp-76, Asp-94, and Asp-118 each contribute to the S-adenosyl-L-methionine site. The active-site Proton acceptor is Lys-158.

It belongs to the class I-like SAM-binding methyltransferase superfamily. RNA methyltransferase RlmE family.

The protein localises to the cytoplasm. It catalyses the reaction uridine(2552) in 23S rRNA + S-adenosyl-L-methionine = 2'-O-methyluridine(2552) in 23S rRNA + S-adenosyl-L-homocysteine + H(+). Specifically methylates the uridine in position 2552 of 23S rRNA at the 2'-O position of the ribose in the fully assembled 50S ribosomal subunit. This chain is Ribosomal RNA large subunit methyltransferase E, found in Methanosphaera stadtmanae (strain ATCC 43021 / DSM 3091 / JCM 11832 / MCB-3).